The chain runs to 92 residues: Probable K(+)/H(+) antiporter subunit F (92 aa).

A run of 3 helical transmembrane segments spans residues 4–24 (AVVW…AFAL), 36–56 (RILG…TFGI), and 62–82 (VYFE…IALA).

The protein belongs to the CPA3 antiporters (TC 2.A.63) subunit F family. As to quaternary structure, may form a hetero-oligomeric complex that consists of six subunits: PhaAB, PhaC, PhaD, PhaE, PhaF and PhaG.

The protein resides in the cell membrane. Part of a K(+) efflux system which is required for the adaptation of R.meliloti to alkaline pH as well as for the infection process during symbiotic nodule development. This chain is Probable K(+)/H(+) antiporter subunit F (phaF), found in Rhizobium meliloti (strain 1021) (Ensifer meliloti).